We begin with the raw amino-acid sequence, 361 residues long: UDP-3-O-acylglucosamine N-acyltransferase (361 aa).

Residue His-253 is the Proton acceptor of the active site.

Belongs to the transferase hexapeptide repeat family. LpxD subfamily. Homotrimer.

It carries out the reaction a UDP-3-O-[(3R)-3-hydroxyacyl]-alpha-D-glucosamine + a (3R)-hydroxyacyl-[ACP] = a UDP-2-N,3-O-bis[(3R)-3-hydroxyacyl]-alpha-D-glucosamine + holo-[ACP] + H(+). It participates in bacterial outer membrane biogenesis; LPS lipid A biosynthesis. Catalyzes the N-acylation of UDP-3-O-acylglucosamine using 3-hydroxyacyl-ACP as the acyl donor. Is involved in the biosynthesis of lipid A, a phosphorylated glycolipid that anchors the lipopolysaccharide to the outer membrane of the cell. The chain is UDP-3-O-acylglucosamine N-acyltransferase from Burkholderia pseudomallei (strain 1710b).